The sequence spans 299 residues: Fructose-1,6-bisphosphatase class 1 (299 aa).

Mg(2+) is bound by residues glutamate 79, aspartate 98, leucine 100, and aspartate 101. Residues aspartate 101–serine 104, tyrosine 207, and lysine 238 contribute to the substrate site. Glutamate 244 provides a ligand contact to Mg(2+).

The protein belongs to the FBPase class 1 family. Homotetramer. It depends on Mg(2+) as a cofactor.

The protein resides in the cytoplasm. The enzyme catalyses beta-D-fructose 1,6-bisphosphate + H2O = beta-D-fructose 6-phosphate + phosphate. It participates in carbohydrate biosynthesis; gluconeogenesis. The sequence is that of Fructose-1,6-bisphosphatase class 1 from Campylobacter curvus (strain 525.92).